A 400-amino-acid polypeptide reads, in one-letter code: Golgin-45 (400 aa).

A compositionally biased stretch (polar residues) spans 1-16 (MTTKNLETKVTVTSSP). A disordered region spans residues 1–58 (MTTKNLETKVTVTSSPIRGAGDGMETEEPPKSVEVTSGVQSRKHHSLQSPWKKAVPSE). Ser15 is modified (phosphoserine). A Tankyrase-binding motif motif is present at residues 18 to 22 (RGAGD). Ser49 is subject to Phosphoserine. Positions 120–213 (NKELSEVKNV…QLERMSIQCD (94 aa)) form a coiled coil. Thr348 is subject to Phosphothreonine. The residue at position 353 (Ser353) is a Phosphoserine. An essential for interaction with GORASP2 region spans residues 394-400 (RGELIAL).

Interacts with GORASP2. Interacts with the GTP-bound form of RAB2, but not with other Golgi Rab proteins. Identified in a complex with RAB2 and GORASP2. ADP-ribosylated by tankyrase TNKS and TNKS2. Poly-ADP-ribosylated protein is recognized by RNF146, followed by ubiquitination. In terms of processing, ubiquitinated by RNF146 when poly-ADP-ribosylated, leading to its degradation. Detected in adrenal gland.

The protein resides in the golgi apparatus membrane. It is found in the nucleus. It localises to the cytoplasm. Functionally, required for normal Golgi structure and for protein transport from the endoplasmic reticulum (ER) through the Golgi apparatus to the cell surface. In Homo sapiens (Human), this protein is Golgin-45 (BLZF1).